Reading from the N-terminus, the 178-residue chain is NADPH azoreductase (178 aa).

106–111 contacts NADP(+); that stretch reads GGGKGG.

Belongs to the azoreductase type 2 family. As to quaternary structure, monomer.

It carries out the reaction N,N-dimethyl-1,4-phenylenediamine + aniline + 2 NADP(+) = 4-(dimethylamino)azobenzene + 2 NADPH + 2 H(+). Functionally, catalyzes the reductive cleavage of azo bond in aromatic azo compounds to the corresponding amines. Requires NADPH as an electron donor for its activity. Compounds with paired naphthalene groups coupled with the azo group are good substrates, with the following preference order: Rocceline &gt; Sumifix Black B &gt; Solar Orange. This is NADPH azoreductase (azr) from Bacillus sp. (strain OY1-2).